A 514-amino-acid polypeptide reads, in one-letter code: Palmitoyltransferase pfa3 (514 aa).

Residues 1–31 (MATLAMSTPSSPTWPKRRPKAWAMRCERYCC) lie on the Cytoplasmic side of the membrane. A helical membrane pass occupies residues 32 to 52 (AAASYFPLAFVYSLTTWAVYV). At 53–64 (EASVGLKPSSSS) the chain is on the lumenal side. The helical transmembrane segment at 65–85 (WIGLPSSILGVVLYLALNISY) threads the bilayer. The Cytoplasmic portion of the chain corresponds to 86 to 174 (TTAVFTDPGS…TCVGLRNYKA (89 aa)). Positions 130 to 180 (RFCKKCQCPKPDRAHHCSTCKRCVLKMDHHCPWLATCVGLRNYKAFLLFLI) constitute a DHHC domain. Residues 175 to 195 (FLLFLIYTSLFCWVDFGVSAI) traverse the membrane as a helical segment. Topologically, residues 196–209 (WIWTEVFNDTRYMD) are lumenal. Residues 210 to 230 (GILPVNVVLLSILGGIIGLVL) traverse the membrane as a helical segment. Topologically, residues 231–514 (TGFTAWHISL…SREDDWRDWD (284 aa)) are cytoplasmic. Disordered regions lie at residues 307–336 (VTRP…DLER) and 436–514 (GNEL…RDWD). A compositionally biased stretch (polar residues) spans 318-328 (DNLTPAQQALS). The span at 505–514 (SREDDWRDWD) shows a compositional bias: basic and acidic residues.

The protein belongs to the DHHC palmitoyltransferase family. PFA3 subfamily. Post-translationally, autopalmitoylated.

It localises to the vacuole membrane. It carries out the reaction L-cysteinyl-[protein] + hexadecanoyl-CoA = S-hexadecanoyl-L-cysteinyl-[protein] + CoA. In terms of biological role, palmitoyltransferase specific for VAC8. Palmitoylates VAC8 at one or more of its N-terminal cysteine residues, which is required for its proper membrane localization. This is Palmitoyltransferase pfa3 (pfa3) from Emericella nidulans (strain FGSC A4 / ATCC 38163 / CBS 112.46 / NRRL 194 / M139) (Aspergillus nidulans).